Reading from the N-terminus, the 618-residue chain is Dihydroxy-acid dehydratase (618 aa).

D81 serves as a coordination point for Mg(2+). C122 is a [2Fe-2S] cluster binding site. The Mg(2+) site is built by D123 and K124. K124 is modified (N6-carboxylysine). C195 provides a ligand contact to [2Fe-2S] cluster. Position 493 (E493) interacts with Mg(2+). Catalysis depends on S519, which acts as the Proton acceptor.

The protein belongs to the IlvD/Edd family. Homodimer. Requires [2Fe-2S] cluster as cofactor. It depends on Mg(2+) as a cofactor.

The catalysed reaction is (2R)-2,3-dihydroxy-3-methylbutanoate = 3-methyl-2-oxobutanoate + H2O. The enzyme catalyses (2R,3R)-2,3-dihydroxy-3-methylpentanoate = (S)-3-methyl-2-oxopentanoate + H2O. It participates in amino-acid biosynthesis; L-isoleucine biosynthesis; L-isoleucine from 2-oxobutanoate: step 3/4. Its pathway is amino-acid biosynthesis; L-valine biosynthesis; L-valine from pyruvate: step 3/4. Its function is as follows. Functions in the biosynthesis of branched-chain amino acids. Catalyzes the dehydration of (2R,3R)-2,3-dihydroxy-3-methylpentanoate (2,3-dihydroxy-3-methylvalerate) into 2-oxo-3-methylpentanoate (2-oxo-3-methylvalerate) and of (2R)-2,3-dihydroxy-3-methylbutanoate (2,3-dihydroxyisovalerate) into 2-oxo-3-methylbutanoate (2-oxoisovalerate), the penultimate precursor to L-isoleucine and L-valine, respectively. The protein is Dihydroxy-acid dehydratase of Shewanella amazonensis (strain ATCC BAA-1098 / SB2B).